The primary structure comprises 464 residues: tRNA modification GTPase MnmE (464 aa).

The (6S)-5-formyl-5,6,7,8-tetrahydrofolate site is built by Arg25, Glu87, and Lys130. The TrmE-type G domain occupies 226-386 (GLSVVLAGQP…LRAELLRIAG (161 aa)). K(+) is bound at residue Asn236. Residues 236-241 (NVGKSS), 255-261 (TPIAGTT), and 280-283 (DTAG) each bind GTP. Ser240 provides a ligand contact to Mg(2+). K(+) is bound by residues Thr255, Ile257, and Thr260. Position 261 (Thr261) interacts with Mg(2+). Lys464 serves as a coordination point for (6S)-5-formyl-5,6,7,8-tetrahydrofolate.

This sequence belongs to the TRAFAC class TrmE-Era-EngA-EngB-Septin-like GTPase superfamily. TrmE GTPase family. In terms of assembly, homodimer. Heterotetramer of two MnmE and two MnmG subunits. Requires K(+) as cofactor.

The protein localises to the cytoplasm. Its function is as follows. Exhibits a very high intrinsic GTPase hydrolysis rate. Involved in the addition of a carboxymethylaminomethyl (cmnm) group at the wobble position (U34) of certain tRNAs, forming tRNA-cmnm(5)s(2)U34. The protein is tRNA modification GTPase MnmE of Burkholderia ambifaria (strain ATCC BAA-244 / DSM 16087 / CCUG 44356 / LMG 19182 / AMMD) (Burkholderia cepacia (strain AMMD)).